The chain runs to 187 residues: UPF0340 protein SP70585_0722 (187 aa).

The protein belongs to the UPF0340 family.

The sequence is that of UPF0340 protein SP70585_0722 from Streptococcus pneumoniae (strain 70585).